We begin with the raw amino-acid sequence, 144 residues long: Universal stress protein F (144 aa).

Belongs to the universal stress protein A family. As to quaternary structure, homodimer.

In Salmonella typhi, this protein is Universal stress protein F (uspF).